A 225-amino-acid polypeptide reads, in one-letter code: Probable molybdenum cofactor guanylyltransferase (225 aa).

Residues 20–22 (LAG), K33, D88, and D117 contribute to the GTP site. D117 contributes to the Mg(2+) binding site.

Belongs to the MobA family. Mg(2+) serves as cofactor.

It is found in the cytoplasm. It catalyses the reaction Mo-molybdopterin + GTP + H(+) = Mo-molybdopterin guanine dinucleotide + diphosphate. In terms of biological role, transfers a GMP moiety from GTP to Mo-molybdopterin (Mo-MPT) cofactor (Moco or molybdenum cofactor) to form Mo-molybdopterin guanine dinucleotide (Mo-MGD) cofactor. In Methanosarcina acetivorans (strain ATCC 35395 / DSM 2834 / JCM 12185 / C2A), this protein is Probable molybdenum cofactor guanylyltransferase.